The following is a 64-amino-acid chain: Translational regulator CsrA (64 aa).

This sequence belongs to the CsrA/RsmA family. Homodimer; the beta-strands of each monomer intercalate to form a hydrophobic core, while the alpha-helices form wings that extend away from the core.

It is found in the cytoplasm. Functionally, a key translational regulator that binds mRNA to regulate translation initiation and/or mRNA stability. Mediates global changes in gene expression, shifting from rapid growth to stress survival by linking envelope stress, the stringent response and the catabolite repression systems. Usually binds in the 5'-UTR; binding at or near the Shine-Dalgarno sequence prevents ribosome-binding, repressing translation, binding elsewhere in the 5'-UTR can activate translation and/or stabilize the mRNA. Its function is antagonized by small RNA(s). The chain is Translational regulator CsrA from Thioalkalivibrio sulfidiphilus (strain HL-EbGR7).